Here is a 98-residue protein sequence, read N- to C-terminus: NADH-ubiquinone oxidoreductase chain 4L (98 aa).

3 helical membrane passes run 1-21, 28-48, and 59-79; these read MTSI…GVLI, STLL…ALLI, and APII…ALLV.

The protein belongs to the complex I subunit 4L family. In terms of assembly, core subunit of respiratory chain NADH dehydrogenase (Complex I) which is composed of 45 different subunits.

The protein localises to the mitochondrion inner membrane. The enzyme catalyses a ubiquinone + NADH + 5 H(+)(in) = a ubiquinol + NAD(+) + 4 H(+)(out). Its function is as follows. Core subunit of the mitochondrial membrane respiratory chain NADH dehydrogenase (Complex I) which catalyzes electron transfer from NADH through the respiratory chain, using ubiquinone as an electron acceptor. Part of the enzyme membrane arm which is embedded in the lipid bilayer and involved in proton translocation. In Trichosurus vulpecula (Brush-tailed possum), this protein is NADH-ubiquinone oxidoreductase chain 4L (MT-ND4L).